The primary structure comprises 202 residues: Glycerol-3-phosphate acyltransferase (202 aa).

Helical transmembrane passes span 2–22 (ANLL…AVVV), 80–100 (LNET…LFPV), 119–139 (AIDP…AFFF), and 158–178 (VLMN…VLLI).

The protein belongs to the PlsY family. In terms of assembly, probably interacts with PlsX.

It localises to the cell inner membrane. The enzyme catalyses an acyl phosphate + sn-glycerol 3-phosphate = a 1-acyl-sn-glycero-3-phosphate + phosphate. The protein operates within lipid metabolism; phospholipid metabolism. Functionally, catalyzes the transfer of an acyl group from acyl-phosphate (acyl-PO(4)) to glycerol-3-phosphate (G3P) to form lysophosphatidic acid (LPA). This enzyme utilizes acyl-phosphate as fatty acyl donor, but not acyl-CoA or acyl-ACP. The polypeptide is Glycerol-3-phosphate acyltransferase (Cupriavidus necator (strain ATCC 17699 / DSM 428 / KCTC 22496 / NCIMB 10442 / H16 / Stanier 337) (Ralstonia eutropha)).